Here is a 157-residue protein sequence, read N- to C-terminus: Tripartite terminase subunit 2 (157 aa).

Residues 1-69 (MSWAKQRVPF…DGEDGHALPD (69 aa)) form a disordered region. Residues 11-27 (LDDDDGEEENDVQDDVD) are compositionally biased toward acidic residues.

The protein belongs to the herpesviridae TRM2 protein family. As to quaternary structure, associates with TRM1 and TRM3 to form the tripartite terminase complex.

It is found in the host nucleus. Component of the molecular motor that translocates viral genomic DNA in empty capsid during DNA packaging. Forms a tripartite terminase complex together with TRM1 and TRM3 in the host cytoplasm. Once the complex reaches the host nucleus, it interacts with the capsid portal vertex. This portal forms a ring in which genomic DNA is translocated into the capsid. The protein is Tripartite terminase subunit 2 of Homo sapiens (Human).